Consider the following 437-residue polypeptide: UDP-N-acetylmuramoylalanine--D-glutamate ligase (437 aa).

ATP is bound at residue Gly-115–Thr-121.

Belongs to the MurCDEF family.

It localises to the cytoplasm. The enzyme catalyses UDP-N-acetyl-alpha-D-muramoyl-L-alanine + D-glutamate + ATP = UDP-N-acetyl-alpha-D-muramoyl-L-alanyl-D-glutamate + ADP + phosphate + H(+). Its pathway is cell wall biogenesis; peptidoglycan biosynthesis. Cell wall formation. Catalyzes the addition of glutamate to the nucleotide precursor UDP-N-acetylmuramoyl-L-alanine (UMA). The polypeptide is UDP-N-acetylmuramoylalanine--D-glutamate ligase (Vibrio campbellii (strain ATCC BAA-1116)).